We begin with the raw amino-acid sequence, 729 residues long: Sodium-dependent neutral amino acid transporter B(0)AT2 (729 aa).

Over 1 to 69 (MPKNSKVVKR…ERPAWNSKLQ (69 aa)) the chain is Cytoplasmic. Phosphoserine occurs at positions 25 and 55. The next 3 helical transmembrane spans lie at 70–90 (YILA…FPYL), 98–117 (AYLL…LFFL), and 142–162 (GIGF…NVII). Topologically, residues 163 to 225 (GWTLFYFSQS…SSISESGGLN (63 aa)) are extracellular. N-linked (GlcNAc...) asparagine glycosylation is present at Asn187. 4 consecutive transmembrane segments (helical) span residues 226 to 244 (WKMT…LAMI), 253 to 270 (IMYF…CFLI), 306 to 323 (VFFA…FSSY), and 335 to 356 (VLVS…FAVL). Over 357–452 (GFKANIVNEK…FIAFTEAMTH (96 aa)) the chain is Extracellular. N-linked (GlcNAc...) asparagine glycans are attached at residues Asn383 and Asn394. 5 helical membrane-spanning segments follow: residues 453-472 (FPAS…NLGL), 496-514 (ILTV…MFVQ), 530-550 (TLPL…VYGI), 571-592 (YMWK…IVNM), and 620-642 (VVCF…IRRC). Topologically, residues 643–729 (NLIDDSSGNL…DMPDMPESDL (87 aa)) are cytoplasmic. Phosphoserine occurs at positions 687, 699, and 701.

This sequence belongs to the sodium:neurotransmitter symporter (SNF) (TC 2.A.22) family. SLC6A15 subfamily. Widely distributed in the central nervous system, including the olfactory bulb, the hypothalamus, the cerebral cortex, the hippocampus, and the cerebellum. In addition, intense expression is found in the motor nuclei including the oculomotor nucleus, abducens nucleus, trigeminal motor nucleus, facial nucleus, hypoglossal nucleus and ventral horn of spinal cord. Intense hybridization signals are also observed in the nuclei containing monoaminergic neurons, such as locus coeruleus, the substantia nigra pars compacta, the ventral tegmental area, the dorsal raphe nucleus and the median raphe nucleus.

The protein localises to the membrane. It carries out the reaction L-leucine(in) + Na(+)(in) = L-leucine(out) + Na(+)(out). It catalyses the reaction L-isoleucine(in) + Na(+)(in) = L-isoleucine(out) + Na(+)(out). The catalysed reaction is L-methionine(in) + Na(+)(in) = L-methionine(out) + Na(+)(out). The enzyme catalyses L-proline(in) + Na(+)(in) = L-proline(out) + Na(+)(out). It carries out the reaction L-alanine(in) + Na(+)(in) = L-alanine(out) + Na(+)(out). It catalyses the reaction L-asparagine(in) + Na(+)(in) = L-asparagine(out) + Na(+)(out). The catalysed reaction is L-valine(in) + Na(+)(in) = L-valine(out) + Na(+)(out). The enzyme catalyses L-cysteine(in) + Na(+)(in) = L-cysteine(out) + Na(+)(out). It carries out the reaction L-glutamine(in) + Na(+)(in) = L-glutamine(out) + Na(+)(out). It catalyses the reaction L-serine(in) + Na(+)(in) = L-serine(out) + Na(+)(out). The catalysed reaction is L-threonine(in) + Na(+)(in) = L-threonine(out) + Na(+)(out). The enzyme catalyses L-pipecolate(in) + Na(+)(in) = L-pipecolate(out) + Na(+)(out). It carries out the reaction L-phenylalanine(in) + Na(+)(in) = L-phenylalanine(out) + Na(+)(out). Its function is as follows. Functions as a sodium-dependent neutral amino acid transporter. Exhibits preference for the branched-chain amino acids, particularly leucine, valine and isoleucine and methionine. Can also transport low-affinity substrates such as alanine, phenylalanine, glutamine and pipecolic acid. Mediates the saturable, pH-sensitive and electrogenic cotransport of proline and sodium ions with a stoichiometry of 1:1. May have a role as transporter for neurotransmitter precursors into neurons. In contrast to other members of the neurotransmitter transporter family, does not appear to be chloride-dependent. In Rattus norvegicus (Rat), this protein is Sodium-dependent neutral amino acid transporter B(0)AT2 (Slc6a15).